The sequence spans 382 residues: D-galactonate dehydratase 1 (382 aa).

Asp183 provides a ligand contact to Mg(2+). The Proton donor role is filled by His185. 2 residues coordinate Mg(2+): Glu209 and Glu235. His285 (proton acceptor) is an active-site residue.

The protein belongs to the mandelate racemase/muconate lactonizing enzyme family. GalD subfamily. Mg(2+) is required as a cofactor.

The catalysed reaction is D-galactonate = 2-dehydro-3-deoxy-D-galactonate + H2O. It functions in the pathway carbohydrate acid metabolism; D-galactonate degradation; D-glyceraldehyde 3-phosphate and pyruvate from D-galactonate: step 1/3. In terms of biological role, catalyzes the dehydration of D-galactonate to 2-keto-3-deoxy-D-galactonate. This chain is D-galactonate dehydratase 1, found in Escherichia coli (strain SMS-3-5 / SECEC).